A 473-amino-acid chain; its full sequence is FAD-dependent monooxygeanse terM (473 aa).

The N-terminal stretch at 1 to 22 (MSENFKVLIIGGSVAGLTLALC) is a signal peptide. FAD is bound by residues Glu-34, Gly-48, Arg-107, Asp-303, and Ala-316. Residues 441–461 (VLYLICGALLAWWASGLVWHF) traverse the membrane as a helical segment.

It belongs to the paxM FAD-dependent monooxygenase family. It depends on FAD as a cofactor.

The protein localises to the membrane. Its pathway is secondary metabolite biosynthesis. Its function is as follows. FAD-dependent monooxygeanse; part of the gene cluster that mediates the biosynthesis of terpendoles, indole-diterpene (IDT) mycotoxins including terpendole I, terpendole K, terpendole C, as well as the kinesin Eg5 inhibitor terpendole E. Terpendoles biosynthesis begins with the synthesis of geranylgeranyl diphosphate (GGPP) by a yet unidentified GGPP synthase. Condensation of indole-3-glycerol phosphate with GGPP by the prenyltransferase terC then forms 3-geranylgeranylindole (3-GGI), followed by epoxidation and cyclization of this intermediate (by the FAD-dependent monooxygeanse terM and the terpene cyclase terB) to form paspaline. The cytochrome monooxygenase terQ then hydroxylates paspalline at C-11 to yield terpendole E. The cytochrome monooxygenase terP converts terpendole E to 13-desoxyterpendole I, and terQ converts 13-desoxyterpendole I into terpendole I. TerF and terK are required for conversion of terpendole I to terpendole C which is further converted to terpendole K. The polypeptide is FAD-dependent monooxygeanse terM (Tolypocladium album (Soil fungus)).